A 459-amino-acid chain; its full sequence is MRRRLSSVLINNQCIASQRHYHTSRPEKPTKKASSHEPTHKFTRKPWEEVPFLTDLKEIEDPEEALSLFHQYQEMGFRHDYPSYSSLIYKLAKSRNFDAVDQILRLVRYRNVRCRESLFMGLIQHYGKAGSVDKAIDVFHKITSFDCVRTIQSLNTLINVLVDNGELEKAKSFFDGAKDMRLRPNSVSFNILIKGFLDKCDWEAACKVFDEMLEMEVQPSVVTYNSLIGFLCRNDDMGKAKSLLEDMIKKRIRPNAVTFGLLMKGLCCKGEYNEAKKLMFDMEYRGCKPGLVNYGILMSDLGKRGRIDEAKLLLGEMKKRRIKPDVVIYNILVNHLCTECRVPEAYRVLTEMQMKGCKPNAATYRMMIDGFCRIEDFDSGLNVLNAMLASRHCPTPATFVCMVAGLIKGGNLDHACFVLEVMGKKNLSFGSGAWQNLLSDLCIKDGGVYCEALSEVISI.

A mitochondrion-targeting transit peptide spans 1-20; the sequence is MRRRLSSVLINNQCIASQRH. The interval 19 to 41 is disordered; the sequence is RHYHTSRPEKPTKKASSHEPTHK. A compositionally biased stretch (basic and acidic residues) spans 24–41; the sequence is SRPEKPTKKASSHEPTHK. PPR repeat units lie at residues 80–114, 115–149, 150–184, 185–219, 220–254, 255–289, 290–324, 325–359, 360–394, and 395–429; these read DYPS…NVRC, RESL…DCVR, TIQS…RLRP, NSVS…EVQP, SVVT…RIRP, NAVT…GCKP, GLVN…RIKP, DVVI…GCKP, NAAT…RHCP, and TPAT…NLSF.

It belongs to the PPR family. P subfamily.

Its subcellular location is the mitochondrion. The polypeptide is Pentatricopeptide repeat-containing protein At1g07740, mitochondrial (Arabidopsis thaliana (Mouse-ear cress)).